The sequence spans 265 residues: Probable esterase tazC (265 aa).

Residues Ser119, Asp209, and His236 each act as charge relay system in the active site.

The protein belongs to the LovG family.

Its pathway is secondary metabolite biosynthesis. Functionally, probable esterase; part of the gene cluster that mediates the biosynthesis of azaterrilone A and other azaphilones, a class of fungal metabolites characterized by a highly oxygenated pyrano-quinone bicyclic core and exhibiting a broad range of bioactivities. The first step of the pathway begins with the non-reducing polyketide synthase tazA that assembles one acetyl-CoA starter unit, five malonyl-CoA units, and catalyzes a series of Claisen condensations, methylation, PT-mediated cyclization, and finally releases the first hexaketide precursor through the R-domain. The tazA product then undergoes reduction on its terminal ketone and the following pyran-ring formation by yet undetermined enzyme(s). Dehydration and enoyl reduction, possibly involving the trans-enoyl reductase tazE leads to the next intermediate. TazD is predicted as an acetyltransferase and might catalyze the acetylation steps leading to the synthesis of azaterrilone A. Azaterrilone A is not the final product of the taz pathway and both the highly reducing polyketide synthase tazB and the dual enzyme tazHJ catalyze late steps of the pathway, leading to the production of the 2 final stereoisomers that contain additional polyketide modification whose structures have still to be determined. This chain is Probable esterase tazC, found in Aspergillus terreus (strain NIH 2624 / FGSC A1156).